Consider the following 360-residue polypeptide: Dihydroorotate dehydrogenase (quinone) (360 aa).

FMN is bound by residues 67–71 (AGLDK) and T91. Substrate is bound at residue K71. Residue 116–120 (NRMGF) coordinates substrate. N145 and N176 together coordinate FMN. N176 serves as a coordination point for substrate. S179 functions as the Nucleophile in the catalytic mechanism. N181 contributes to the substrate binding site. The FMN site is built by K222 and S250. 251-252 (NT) serves as a coordination point for substrate. FMN is bound by residues G272, G301, and 322 to 323 (YS).

Belongs to the dihydroorotate dehydrogenase family. Type 2 subfamily. In terms of assembly, monomer. FMN serves as cofactor.

Its subcellular location is the cell membrane. It carries out the reaction (S)-dihydroorotate + a quinone = orotate + a quinol. It functions in the pathway pyrimidine metabolism; UMP biosynthesis via de novo pathway; orotate from (S)-dihydroorotate (quinone route): step 1/1. In terms of biological role, catalyzes the conversion of dihydroorotate to orotate with quinone as electron acceptor. The sequence is that of Dihydroorotate dehydrogenase (quinone) from Deinococcus deserti (strain DSM 17065 / CIP 109153 / LMG 22923 / VCD115).